The following is a 252-amino-acid chain: F-box/SPRY domain-containing protein 1 (252 aa).

In terms of domain architecture, F-box spans 1–48; the sequence is MVDPLCNYNVLESIFSYLELNDLNRCSQVCKSWYHFLNDENSDVWRWH. The B30.2/SPRY domain maps to 58–250; that stretch reads VKSDLLSSVT…VSMVYLGTPL (193 aa).

It belongs to the FBXO45/Fsn family. Component of an E3 ubiquitin ligase complex composed of hiw and Fsn.

Its subcellular location is the synapse. It participates in protein modification; protein ubiquitination. Required in the presynaptic motoneuron to down-regulate the levels of wnd and restrain synaptic terminal growth at the neuromuscular junction (NMJ). The sequence is that of F-box/SPRY domain-containing protein 1 from Drosophila grimshawi (Hawaiian fruit fly).